Here is a 194-residue protein sequence, read N- to C-terminus: 7-methyl-GTP pyrophosphatase (194 aa).

Aspartate 69 acts as the Proton acceptor in catalysis.

It belongs to the Maf family. YceF subfamily. The cofactor is a divalent metal cation.

The protein localises to the cytoplasm. The catalysed reaction is N(7)-methyl-GTP + H2O = N(7)-methyl-GMP + diphosphate + H(+). In terms of biological role, nucleoside triphosphate pyrophosphatase that hydrolyzes 7-methyl-GTP (m(7)GTP). May have a dual role in cell division arrest and in preventing the incorporation of modified nucleotides into cellular nucleic acids. This Salmonella choleraesuis (strain SC-B67) protein is 7-methyl-GTP pyrophosphatase (yceF1).